Reading from the N-terminus, the 79-residue chain is Small ribosomal subunit protein bS18 (79 aa).

This sequence belongs to the bacterial ribosomal protein bS18 family. In terms of assembly, part of the 30S ribosomal subunit. Forms a tight heterodimer with protein bS6.

Binds as a heterodimer with protein bS6 to the central domain of the 16S rRNA, where it helps stabilize the platform of the 30S subunit. The chain is Small ribosomal subunit protein bS18 from Streptococcus suis (strain 98HAH33).